A 68-amino-acid chain; its full sequence is Large ribosomal subunit protein uL29 (68 aa).

It belongs to the universal ribosomal protein uL29 family.

The polypeptide is Large ribosomal subunit protein uL29 (Rhodopseudomonas palustris (strain BisA53)).